Here is a 415-residue protein sequence, read N- to C-terminus: Serine hydroxymethyltransferase (415 aa).

(6S)-5,6,7,8-tetrahydrofolate is bound by residues L117 and 121–123 (GHL). An N6-(pyridoxal phosphate)lysine modification is found at K226. (6S)-5,6,7,8-tetrahydrofolate contacts are provided by residues E241 and 349 to 351 (SPF).

Belongs to the SHMT family. In terms of assembly, homodimer. Pyridoxal 5'-phosphate serves as cofactor.

It is found in the cytoplasm. The catalysed reaction is (6R)-5,10-methylene-5,6,7,8-tetrahydrofolate + glycine + H2O = (6S)-5,6,7,8-tetrahydrofolate + L-serine. Its pathway is one-carbon metabolism; tetrahydrofolate interconversion. It functions in the pathway amino-acid biosynthesis; glycine biosynthesis; glycine from L-serine: step 1/1. Functionally, catalyzes the reversible interconversion of serine and glycine with tetrahydrofolate (THF) serving as the one-carbon carrier. This reaction serves as the major source of one-carbon groups required for the biosynthesis of purines, thymidylate, methionine, and other important biomolecules. Also exhibits THF-independent aldolase activity toward beta-hydroxyamino acids, producing glycine and aldehydes, via a retro-aldol mechanism. This is Serine hydroxymethyltransferase from Trichlorobacter lovleyi (strain ATCC BAA-1151 / DSM 17278 / SZ) (Geobacter lovleyi).